A 175-amino-acid polypeptide reads, in one-letter code: Ribosome maturation factor RimM (175 aa).

One can recognise a PRC barrel domain in the interval Glu96 to Phe175.

It belongs to the RimM family. In terms of assembly, binds ribosomal protein uS19.

Its subcellular location is the cytoplasm. Functionally, an accessory protein needed during the final step in the assembly of 30S ribosomal subunit, possibly for assembly of the head region. Essential for efficient processing of 16S rRNA. May be needed both before and after RbfA during the maturation of 16S rRNA. It has affinity for free ribosomal 30S subunits but not for 70S ribosomes. The protein is Ribosome maturation factor RimM of Psychromonas ingrahamii (strain DSM 17664 / CCUG 51855 / 37).